The chain runs to 500 residues: Na(+)/H(+) antiporter NhaB (500 aa).

A run of 11 helical transmembrane segments spans residues 23 to 43, 53 to 73, 96 to 116, 129 to 149, 150 to 170, 205 to 225, 238 to 258, 311 to 331, 350 to 370, 450 to 470, and 477 to 497; these read VVIC…GPVA, IFTL…LLLI, VILL…LLLF, AILA…LDAL, TVTA…HRVA, LLMH…VGEP, FVDF…AGLV, ILII…LMVI, FQDA…VAVI, ATPN…APLI, and MVWM…WAVT.

The protein belongs to the NhaB Na(+)/H(+) (TC 2.A.34) antiporter family.

The protein localises to the cell inner membrane. It catalyses the reaction 2 Na(+)(in) + 3 H(+)(out) = 2 Na(+)(out) + 3 H(+)(in). In terms of biological role, na(+)/H(+) antiporter that extrudes sodium in exchange for external protons. In Pseudomonas putida (strain ATCC 47054 / DSM 6125 / CFBP 8728 / NCIMB 11950 / KT2440), this protein is Na(+)/H(+) antiporter NhaB.